Consider the following 684-residue polypeptide: Methionine--tRNA ligase (684 aa).

Positions 14-24 (PYANGAIHLGH) match the 'HIGH' region motif. Cys145, Cys148, Cys158, and Cys161 together coordinate Zn(2+). The 'KMSKS' region motif lies at 330–334 (KMSKS). Lys333 serves as a coordination point for ATP. In terms of domain architecture, tRNA-binding spans 582–684 (DFAKLDLRVA…CGIRPGMQVK (103 aa)).

Belongs to the class-I aminoacyl-tRNA synthetase family. MetG type 1 subfamily. In terms of assembly, homodimer. The cofactor is Zn(2+).

The protein localises to the cytoplasm. It carries out the reaction tRNA(Met) + L-methionine + ATP = L-methionyl-tRNA(Met) + AMP + diphosphate. Functionally, is required not only for elongation of protein synthesis but also for the initiation of all mRNA translation through initiator tRNA(fMet) aminoacylation. This chain is Methionine--tRNA ligase, found in Haemophilus ducreyi (strain 35000HP / ATCC 700724).